The chain runs to 127 residues: Glycine cleavage system H protein (127 aa).

In terms of domain architecture, Lipoyl-binding spans lysine 22–glutamate 104. At lysine 63 the chain carries N6-lipoyllysine.

The protein belongs to the GcvH family. As to quaternary structure, the glycine cleavage system is composed of four proteins: P, T, L and H. It depends on (R)-lipoate as a cofactor.

Functionally, the glycine cleavage system catalyzes the degradation of glycine. The H protein shuttles the methylamine group of glycine from the P protein to the T protein. In terms of biological role, is also involved in protein lipoylation via its role as an octanoyl/lipoyl carrier protein intermediate. The polypeptide is Glycine cleavage system H protein (Bacillus licheniformis (strain ATCC 14580 / DSM 13 / JCM 2505 / CCUG 7422 / NBRC 12200 / NCIMB 9375 / NCTC 10341 / NRRL NRS-1264 / Gibson 46)).